Consider the following 350-residue polypeptide: Biotin synthase (350 aa).

The region spanning 41–268 (NEVQVSRLLS…KSRVRLSAGR (228 aa)) is the Radical SAM core domain. Cysteine 56, cysteine 60, and cysteine 63 together coordinate [4Fe-4S] cluster. 4 residues coordinate [2Fe-2S] cluster: cysteine 100, cysteine 131, cysteine 191, and arginine 263.

The protein belongs to the radical SAM superfamily. Biotin synthase family. As to quaternary structure, homodimer. The cofactor is [4Fe-4S] cluster. [2Fe-2S] cluster is required as a cofactor.

It carries out the reaction (4R,5S)-dethiobiotin + (sulfur carrier)-SH + 2 reduced [2Fe-2S]-[ferredoxin] + 2 S-adenosyl-L-methionine = (sulfur carrier)-H + biotin + 2 5'-deoxyadenosine + 2 L-methionine + 2 oxidized [2Fe-2S]-[ferredoxin]. Its pathway is cofactor biosynthesis; biotin biosynthesis; biotin from 7,8-diaminononanoate: step 2/2. Catalyzes the conversion of dethiobiotin (DTB) to biotin by the insertion of a sulfur atom into dethiobiotin via a radical-based mechanism. This chain is Biotin synthase, found in Shewanella pealeana (strain ATCC 700345 / ANG-SQ1).